The following is a 4042-amino-acid chain: Polyketide synthase-nonribosomal peptide synthetase phmA (4042 aa).

Residues 10-411 form the Ketosynthase family 3 (KS3) domain; that stretch reads NEPIAIVGSA…GANAHAILEA (402 aa). An acyl transferase region spans residues 519–837; that stretch reads VFTGQGAQWA…TGLLSRDRDD (319 aa). Residues 909–1042 form an N-terminal hotdog fold region; sequence HELLGTKCPD…GRISALFGPP (134 aa). The tract at residues 909 to 1208 is dehydratase (DH) domain; it reads HELLGTKCPD…LHTKPLGHAT (300 aa). In terms of domain architecture, PKS/mFAS DH spans 909 to 1210; that stretch reads HELLGTKCPD…TKPLGHATPE (302 aa). Catalysis depends on H941, which acts as the Proton acceptor; for dehydratase activity. Residues 1057–1210 are C-terminal hotdog fold; the sequence is MIDVDPEQFY…TKPLGHATPE (154 aa). D1117 acts as the Proton donor; for dehydratase activity in catalysis. The interval 1349–1572 is methyltransferase (MT) domain; the sequence is DDMLNDFYVK…VDEHVEFIRN (224 aa). Residues 2073 to 2246 form a ketoreductase (KR)domain region; sequence TYWLVGLTGG…AGSVINIGAI (174 aa). The 83-residue stretch at 2351-2433 folds into the Carrier 1 domain; it reads ATTADEVNEA…ELVSAAQEQL (83 aa). O-(pantetheine 4'-phosphoryl)serine is present on S2393. Disordered regions lie at residues 2460–2504 and 2535–2554; these read KTET…SKDA and ATRSKTSSSSSSFTSDPEND. Acidic residues predominate over residues 2479-2490; sequence EVDEEEQEEDEA. The segment covering 2495-2504 has biased composition (polar residues); the sequence is NFFSSASKDA. A compositionally biased stretch (low complexity) spans 2536–2549; sequence TRSKTSSSSSSFTS. The condensation stretch occupies residues 2584-3019; that stretch reads RVSPMSFGQA…LGRPPLYDPQ (436 aa). The tract at residues 3047–3443 is adenylation; the sequence is EMASRFGSQI…TADGLVLEGR (397 aa). The region spanning 3562–3642 is the Carrier 2 domain; that stretch reads KENKSPESEL…AMLNLISPAS (81 aa). S3602 carries the O-(pantetheine 4'-phosphoryl)serine modification. The reductase-like stretch occupies residues 3703–3924; the sequence is ITGASGFLGK…DFVSVESVAH (222 aa).

This sequence belongs to the NRP synthetase family.

The protein operates within mycotoxin biosynthesis. Hybrid PKS-NRPS synthetase; part of the gene cluster that mediates the biosynthesis of the mycotoxins phomacins, leucine-derived cytochalasans with potent actin polymerization-inhibitory activities and monocot-specific antigerminative activities. The first step in the pathway is catalyzed by the hybrid PKS-NRPS phmA, assisted by the enoyl reductase phmE, that are responsible for fusion of the leucine precursor and the polyketide backbone to produce a 2-pyrrolidone intermediate. The polyketide synthase module (PKS) of phmA is responsible for the synthesis of the polyketide backbone and the downstream nonribosomal peptide synthetase (NRPS) amidates the carboxyl end of the polyketide with the leucine precursor. Because phmA lacks a designated enoylreductase (ER) domain, the required activity is provided the enoyl reductase phmE. Reduction by the hydrolyase phmG, followed by dehydration and intra-molecular Diels-Alder cyclization by the Diels-Alderase phmD then yield the required isoindolone-fused macrocycle. A number of oxidative steps catalyzed by the tailoring cytochrome P450 monooxygenase phmB, the FAD-linked oxidoreductase phmC and the short-chain dehydrogenase/reductase phmF, are further required to afford the final products, phomacin D and phomacin E. This is Polyketide synthase-nonribosomal peptide synthetase phmA from Phaeosphaeria nodorum (strain SN15 / ATCC MYA-4574 / FGSC 10173) (Glume blotch fungus).